Reading from the N-terminus, the 564-residue chain is Kelch repeat and BTB domain-containing protein 1 (564 aa).

Residues 21-88 form the BTB domain; sequence CDINIVINDE…IYGIPLSLTN (68 aa). A BACK domain is found at 123–219; sequence CIDFYIYADK…SLLSPQVIKS (97 aa). 5 Kelch repeats span residues 252–297, 298–346, 347–395, 397–441, and 442–492; these read IELI…VLDN, IIYM…ADDE, YIYC…MLNG, IYVI…VHDG, and KIYI…STHN.

As to quaternary structure, interacts (via BTB domain) with host CUL3.

The protein localises to the host cytoplasm. Its function is as follows. Probable substrate-specific adapter of CUL3-containing E3 ubiquitin-protein ligases which mediate the ubiquitination and subsequent proteasomal degradation of host target proteins. This Bos taurus (Bovine) protein is Kelch repeat and BTB domain-containing protein 1 (KBTB1).